Here is a 967-residue protein sequence, read N- to C-terminus: Isoleucine--tRNA ligase (967 aa).

The 'HIGH' region motif lies at 68–78; sequence PYANGTLHMGH. Glu583 is an L-isoleucyl-5'-AMP binding site. The 'KMSKS' region motif lies at 624–628; it reads KMSKS. ATP is bound at residue Lys627. Positions 937, 940, 957, and 960 each coordinate Zn(2+).

The protein belongs to the class-I aminoacyl-tRNA synthetase family. IleS type 1 subfamily. In terms of assembly, monomer. Zn(2+) is required as a cofactor.

It is found in the cytoplasm. It carries out the reaction tRNA(Ile) + L-isoleucine + ATP = L-isoleucyl-tRNA(Ile) + AMP + diphosphate. Its function is as follows. Catalyzes the attachment of isoleucine to tRNA(Ile). As IleRS can inadvertently accommodate and process structurally similar amino acids such as valine, to avoid such errors it has two additional distinct tRNA(Ile)-dependent editing activities. One activity is designated as 'pretransfer' editing and involves the hydrolysis of activated Val-AMP. The other activity is designated 'posttransfer' editing and involves deacylation of mischarged Val-tRNA(Ile). In Prochlorococcus marinus (strain NATL1A), this protein is Isoleucine--tRNA ligase.